The primary structure comprises 1516 residues: UDP-glucose:glycoprotein glucosyltransferase 2 (1516 aa).

A signal peptide spans 1 to 27 (MAPAKATNVVRLLLGSTALWLSQLGSG). Asn-256, Asn-286, Asn-920, and Asn-950 each carry an N-linked (GlcNAc...) asparagine glycan. Residues 1220–1516 (LHKENKKEKD…QDTILTHDEL (297 aa)) are glucosyltransferase. A Phosphotyrosine modification is found at Tyr-1289. Residues 1513 to 1516 (HDEL) carry the Prevents secretion from ER motif.

Belongs to the glycosyltransferase 8 family. Interacts with METTL23. Interacts with SELENOF. Ca(2+) serves as cofactor. Requires Mn(2+) as cofactor. In terms of tissue distribution, higher levels in kidney, pancreas, heart, and skeletal muscle.

It is found in the endoplasmic reticulum lumen. The protein resides in the endoplasmic reticulum-Golgi intermediate compartment. It catalyses the reaction N(4)-(alpha-D-Man-(1-&gt;2)-alpha-D-Man-(1-&gt;2)-alpha-D-Man-(1-&gt;3)-[alpha-D-Man-(1-&gt;2)-alpha-D-Man-(1-&gt;3)-[alpha-D-Man-(1-&gt;2)-alpha-D-Man-(1-&gt;6)]-alpha-D-Man-(1-&gt;6)]-beta-D-Man-(1-&gt;4)-beta-D-GlcNAc-(1-&gt;4)-beta-D-GlcNAc)-L-asparaginyl-[protein] (N-glucan mannose isomer 9A1,2,3B1,2,3) + UDP-alpha-D-glucose = N(4)-(alpha-D-Glc-(1-&gt;3)-alpha-D-Man-(1-&gt;2)-alpha-D-Man-(1-&gt;2)-alpha-D-Man-(1-&gt;3)-[alpha-D-Man-(1-&gt;2)-alpha-D-Man-(1-&gt;3)-[alpha-D-Man-(1-&gt;2)-alpha-D-Man-(1-&gt;6)]-alpha-D-Man-(1-&gt;6)]-beta-D-Man-(1-&gt;4)-beta-D-GlcNAc-(1-&gt;4)-beta-D-GlcNAc)-L-asparaginyl-[protein] + UDP + H(+). It functions in the pathway protein modification; protein glycosylation. Ethylenediaminetetraacetic acid completely abolishes catalytic activity. Catalytic activity is enhanced by complex formation with SELENOF. Its function is as follows. Recognizes glycoproteins with minor folding defects. Reglucosylates single N-glycans near the misfolded part of the protein, thus providing quality control for protein folding in the endoplasmic reticulum. Reglucosylated proteins are recognized by calreticulin for recycling to the endoplasmic reticulum and refolding or degradation. This chain is UDP-glucose:glycoprotein glucosyltransferase 2 (UGGT2), found in Homo sapiens (Human).